The following is a 268-amino-acid chain: Protein CDV3 homolog (268 aa).

The segment covering 40–50 (KREVVKPKKPE) has biased composition (basic and acidic residues). 2 disordered regions span residues 40–145 (KREV…ERVG) and 184–268 (QQAG…DEAS). The segment covering 51 to 61 (AAAGGVAVVGE) has biased composition (low complexity). Positions 76–85 (VEEEWKEFEE) are enriched in acidic residues. Polar residues predominate over residues 98-107 (QLSTITAQES). Acidic residues predominate over residues 123-132 (NYDEDDEDSN). Over residues 221–239 (RPEEQRKKKNEPAFEEVRH) the composition is skewed to basic and acidic residues.

Belongs to the CDV3 family.

The sequence is that of Protein CDV3 homolog from Drosophila yakuba (Fruit fly).